A 937-amino-acid polypeptide reads, in one-letter code: Inactive tyrosine-protein kinase transmembrane receptor ROR1 (937 aa).

The first 29 residues, 1–29, serve as a signal peptide directing secretion; that stretch reads MHRPRRRGTRPPPLALLAALLLAARGADA. Residues 30–406 are Extracellular-facing; it reads QETELSVSAE…KEKNKMEILY (377 aa). An Ig-like C2-type domain is found at 42 to 141; sequence PTSSWNTSSE…VATNGKKVVS (100 aa). Residues Asn47 and Asn66 are each glycosylated (N-linked (GlcNAc...) asparagine). 9 cysteine pairs are disulfide-bonded: Cys79–Cys131, Cys170–Cys235, Cys178–Cys228, Cys219–Cys260, Cys248–Cys296, Cys252–Cys282, Cys313–Cys391, Cys334–Cys374, and Cys362–Cys386. One can recognise an FZ domain in the interval 165–299; sequence EEDGFCQPYR…SPEAANCIRI (135 aa). An N-linked (GlcNAc...) asparagine glycan is attached at Asn184. Positions 312–391 constitute a Kringle domain; it reads KCYNSTGVDY…KSDLCDIPAC (80 aa). N-linked (GlcNAc...) asparagine glycosylation occurs at Asn315. The chain crosses the membrane as a helical span at residues 407–427; sequence ILVPSVAIPLAIAFLFFFICV. Topologically, residues 428–937 are cytoplasmic; it reads CRNNQKSSSP…HTESMISAEV (510 aa). Positions 473 to 746 constitute a Protein kinase domain; it reads VRFMEELGEC…PRFKDIHVRL (274 aa). ATP-binding positions include 479–487 and Lys506; that span reads LGECTFGKI. Tyr645 carries the phosphotyrosine; by autocatalysis modification. Residues 753 to 762 are compositionally biased toward low complexity; it reads SSHTSSTTPS. Disordered regions lie at residues 753–778, 840–890, and 916–937; these read SSHT…ASPV, GPPR…HMSI, and QSSL…SAEV. The span at 763–778 shows a compositional bias: polar residues; it reads GGNATTQTTSLSASPV. Over residues 854–864 the composition is skewed to low complexity; the sequence is RSPSSASGSTS. The span at 865–880 shows a compositional bias: polar residues; sequence TGHVASLPSSGSNQEA.

Belongs to the protein kinase superfamily. Tyr protein kinase family. ROR subfamily. Interacts with ERBB2 and IGFBP5. At postnatal P0, expressed in heart, lung, liver, kidney, spleen and inner ear.

It localises to the membrane. It is found in the cell projection. The protein localises to the axon. In terms of biological role, has very low kinase activity in vitro and is unlikely to function as a tyrosine kinase in vivo. Receptor for ligand WNT5A which activate downstream NFkB signaling pathway and may result in the inhibition of WNT3A-mediated signaling. In inner ear, crucial for spiral ganglion neurons to innervate auditory hair cells. Via IGFBP5 ligand, forms a complex with ERBB2 to enhance CREB oncogenic signaling. The polypeptide is Inactive tyrosine-protein kinase transmembrane receptor ROR1 (Ror1) (Mus musculus (Mouse)).